The following is a 461-amino-acid chain: D-phenylhydantoinase (461 aa).

A divalent metal cation-binding residues include His-59, His-61, and Lys-151. The residue at position 151 (Lys-151) is an N6-carboxylysine. Residue Tyr-156 coordinates substrate. His-182 and His-239 together coordinate a divalent metal cation. Ser-286 is a substrate binding site. Asp-313 contacts a divalent metal cation. Asn-335 is a substrate binding site.

This sequence belongs to the metallo-dependent hydrolases superfamily. Hydantoinase/dihydropyrimidinase family. Homotetramer. Requires a divalent metal cation as cofactor. Post-translationally, carboxylation allows a single lysine to coordinate two divalent metal cations.

It carries out the reaction D-5-phenylhydantoin + H2O = N-carbamoyl-D-phenylglycine + H(+). Its function is as follows. Catalyzes the stereospecific hydrolysis of the cyclic amide bond of D-hydantoin derivatives with an aromatic side chains at the 5'-position. Has no activity on dihydropyrimidines. The physiological function is unknown. This chain is D-phenylhydantoinase, found in Escherichia coli (strain SE11).